We begin with the raw amino-acid sequence, 87 residues long: Small ribosomal subunit protein bS20 (87 aa).

It belongs to the bacterial ribosomal protein bS20 family.

Its function is as follows. Binds directly to 16S ribosomal RNA. The protein is Small ribosomal subunit protein bS20 of Clostridium botulinum (strain Eklund 17B / Type B).